The sequence spans 406 residues: Phosphoglycerate kinase (406 aa).

Substrate-binding positions include 22-24 (DLN), R37, 60-63 (HLGN), R119, and R152. ATP contacts are provided by residues K202, E325, and 355–358 (GGDT).

The protein belongs to the phosphoglycerate kinase family. Monomer.

The protein resides in the cytoplasm. It carries out the reaction (2R)-3-phosphoglycerate + ATP = (2R)-3-phospho-glyceroyl phosphate + ADP. It functions in the pathway carbohydrate degradation; glycolysis; pyruvate from D-glyceraldehyde 3-phosphate: step 2/5. The protein is Phosphoglycerate kinase of Orientia tsutsugamushi (strain Ikeda) (Rickettsia tsutsugamushi).